We begin with the raw amino-acid sequence, 158 residues long: uncharacterized protein (158 aa).

This is an uncharacterized protein from Saccharolobus islandicus (Sulfolobus islandicus).